Consider the following 346-residue polypeptide: Phosphoribosylformylglycinamidine cyclo-ligase (346 aa).

The protein belongs to the AIR synthase family.

The protein resides in the cytoplasm. It carries out the reaction 2-formamido-N(1)-(5-O-phospho-beta-D-ribosyl)acetamidine + ATP = 5-amino-1-(5-phospho-beta-D-ribosyl)imidazole + ADP + phosphate + H(+). It participates in purine metabolism; IMP biosynthesis via de novo pathway; 5-amino-1-(5-phospho-D-ribosyl)imidazole from N(2)-formyl-N(1)-(5-phospho-D-ribosyl)glycinamide: step 2/2. The chain is Phosphoribosylformylglycinamidine cyclo-ligase from Vibrio atlanticus (strain LGP32) (Vibrio splendidus (strain Mel32)).